The primary structure comprises 325 residues: Formimidoylglutamase (325 aa).

Residues His-125, Asp-155, His-157, Asp-159, Cys-246, and Asp-248 each contribute to the Mn(2+) site.

This sequence belongs to the arginase family. The cofactor is Mn(2+).

It catalyses the reaction N-formimidoyl-L-glutamate + H2O = formamide + L-glutamate. It functions in the pathway amino-acid degradation; L-histidine degradation into L-glutamate; L-glutamate from N-formimidoyl-L-glutamate (hydrolase route): step 1/1. In terms of biological role, catalyzes the conversion of N-formimidoyl-L-glutamate to L-glutamate and formamide. The chain is Formimidoylglutamase from Ralstonia nicotianae (strain ATCC BAA-1114 / GMI1000) (Ralstonia solanacearum).